The following is a 137-amino-acid chain: Hemoglobin subunit alpha-2 (137 aa).

Positions 1–137 (DDRSHILAIW…VGGSLTSKYR (137 aa)) constitute a Globin domain. Position 54 (histidine 54) interacts with O2. Residue histidine 83 coordinates heme b.

It belongs to the globin family. In terms of processing, the N-terminus of the mature protein is acetylated. In terms of tissue distribution, red blood cells.

The polypeptide is Hemoglobin subunit alpha-2 (Telmatobius peruvianus (Andean frog)).